The primary structure comprises 155 residues: Perlucin (155 aa).

3 cysteine pairs are disulfide-bonded: cysteine 2–cysteine 13, cysteine 30–cysteine 127, and cysteine 102–cysteine 119. In terms of domain architecture, C-type lectin spans 9–128 (NRRSCYWFST…CQKPSHFICE (120 aa)). Residue asparagine 84 is glycosylated (N-linked (GlcNAc...) asparagine). 2 consecutive repeat copies span residues 136-145 (NSLHANLQQR) and 146-155 (DSLHANLQQR).

Post-translationally, glycosylated.

May promote nucleation and/or growth of calcium carbonate crystals. Binds to D-galactose and D-mannose/D-glucose. This Haliotis laevigata (Smooth Australian abalone) protein is Perlucin.